The primary structure comprises 45 residues: Metallothionein-like protein 1C (45 aa).

The protein belongs to the metallothionein superfamily. Type 15 family. Widely expressed at low levels.

Metallothioneins have a high content of cysteine residues that bind various heavy metals. Confers tolerance to cadmium (Cd) and plays a role in Cd and zinc (Zn) homeostasis. The chain is Metallothionein-like protein 1C (MT1C) from Arabidopsis thaliana (Mouse-ear cress).